The chain runs to 310 residues: Probable mitochondrial import receptor subunit TOM40-2 (310 aa).

The residue at position 1 (methionine 1) is an N-acetylmethionine.

The protein belongs to the Tom40 family. As to quaternary structure, forms part of the preprotein translocase complex of the outer mitochondrial membrane (TOM complex) which consists of at least 6 different proteins (TOM5, TOM6, TOM7, TOM20, TOM22/TOM9 and TOM40). Present in a large lipid-enriched complex called mitochondrial transmembrane lipoprotein (MTL) complex made of proteins located in the two mitochondrial membranes, including the TOM complex and the core components of the MICOS complex and containing at least digalactosyldiacylglycerol (DGDG). Binds to MIC60. Component of a mitochondrial large protein complex that contains, at least, MIC60, DGS1, TOM40, TOM20 proteins, and petC/RISP. As to expression, expressed in roots, flowers, young cotyledons and leaves.

The protein localises to the mitochondrion outer membrane. Functionally, central component of the receptor complex responsible for the recognition and translocation of cytosolically synthesized mitochondrial preproteins. Together with TOM22 functions as the transit peptide receptor at the surface of the mitochondrion outer membrane and facilitates the movement of preproteins into the translocation pore. Directly involved in the pore formation. The sequence is that of Probable mitochondrial import receptor subunit TOM40-2 from Arabidopsis thaliana (Mouse-ear cress).